The following is a 69-amino-acid chain: Large ribosomal subunit protein bL31 (69 aa).

Cysteine 16, cysteine 18, cysteine 37, and cysteine 40 together coordinate Zn(2+).

This sequence belongs to the bacterial ribosomal protein bL31 family. Type A subfamily. Part of the 50S ribosomal subunit. Zn(2+) serves as cofactor.

Binds the 23S rRNA. This is Large ribosomal subunit protein bL31 from Buchnera aphidicola subsp. Baizongia pistaciae (strain Bp).